Consider the following 271-residue polypeptide: 3-methyl-2-oxobutanoate hydroxymethyltransferase (271 aa).

Aspartate 49 and aspartate 88 together coordinate Mg(2+). 3-methyl-2-oxobutanoate-binding positions include 49–50 (DS), aspartate 88, and lysine 118. A Mg(2+)-binding site is contributed by glutamate 120. The active-site Proton acceptor is the glutamate 187.

It belongs to the PanB family. Homodecamer; pentamer of dimers. The cofactor is Mg(2+).

It localises to the cytoplasm. It catalyses the reaction 3-methyl-2-oxobutanoate + (6R)-5,10-methylene-5,6,7,8-tetrahydrofolate + H2O = 2-dehydropantoate + (6S)-5,6,7,8-tetrahydrofolate. Its pathway is cofactor biosynthesis; (R)-pantothenate biosynthesis; (R)-pantoate from 3-methyl-2-oxobutanoate: step 1/2. Functionally, catalyzes the reversible reaction in which hydroxymethyl group from 5,10-methylenetetrahydrofolate is transferred onto alpha-ketoisovalerate to form ketopantoate. In Bartonella bacilliformis (strain ATCC 35685 / KC583 / Herrer 020/F12,63), this protein is 3-methyl-2-oxobutanoate hydroxymethyltransferase.